The chain runs to 163 residues: MNIIEQFEKEQIEKLLEQRGVPQFSPGDTLRVHVKVIEGNRQRVQVYEGVCIARRNAALNSSFTVRKISFGEGVERIFPLYAPTIDRIEVVRRGKVRRAKLYYLRGRQGRSARIIEDTTATQQALAVEREISQERKASGKDQASKPEVRPQGKKPAPKPKAKK.

Residues 131 to 150 (ISQERKASGKDQASKPEVRP) are compositionally biased toward basic and acidic residues. The segment at 131–163 (ISQERKASGKDQASKPEVRPQGKKPAPKPKAKK) is disordered. Over residues 151–163 (QGKKPAPKPKAKK) the composition is skewed to basic residues.

It belongs to the bacterial ribosomal protein bL19 family.

This protein is located at the 30S-50S ribosomal subunit interface and may play a role in the structure and function of the aminoacyl-tRNA binding site. In Rhodospirillum rubrum (strain ATCC 11170 / ATH 1.1.1 / DSM 467 / LMG 4362 / NCIMB 8255 / S1), this protein is Large ribosomal subunit protein bL19.